Here is a 185-residue protein sequence, read N- to C-terminus: MIDETLLEAEEKMERAIEHAKEEFGAIRTGRANAAMFSKIVIDYYGSPTPLPQMASIGVPEPRMVIIKPYDTSQTNAMEKAIRDSDLGVNPNNEGNQLRILLPQMTEERRREMIKVARHKGEEAKVAVRNVRRKAKEELDRLVKAGEVGEDDGRRAEKELDDLTQRFVGTVDELIKHKEAELLEV.

It belongs to the RRF family.

Its subcellular location is the cytoplasm. In terms of biological role, responsible for the release of ribosomes from messenger RNA at the termination of protein biosynthesis. May increase the efficiency of translation by recycling ribosomes from one round of translation to another. This is Ribosome-recycling factor from Salinispora tropica (strain ATCC BAA-916 / DSM 44818 / JCM 13857 / NBRC 105044 / CNB-440).